A 365-amino-acid polypeptide reads, in one-letter code: Peptide chain release factor 2 (365 aa).

Glutamine 252 carries the post-translational modification N5-methylglutamine.

This sequence belongs to the prokaryotic/mitochondrial release factor family. Post-translationally, methylated by PrmC. Methylation increases the termination efficiency of RF2.

Its subcellular location is the cytoplasm. Functionally, peptide chain release factor 2 directs the termination of translation in response to the peptide chain termination codons UGA and UAA. This Shigella flexneri protein is Peptide chain release factor 2.